Reading from the N-terminus, the 206-residue chain is Probable N-acetyltransferase 14 (206 aa).

The 198-residue stretch at 9–206 folds into the N-acetyltransferase domain; that stretch reads LSVREMREEE…TIVQEFRKDI (198 aa). Helical transmembrane passes span 37–57 and 60–80; these read LILY…ASSG and FILN…IVGL.

The protein belongs to the camello family.

It is found in the membrane. In terms of biological role, probable acetyltransferase. This is Probable N-acetyltransferase 14 (nat14) from Xenopus tropicalis (Western clawed frog).